A 398-amino-acid polypeptide reads, in one-letter code: Exodeoxyribonuclease 7 large subunit (398 aa).

It belongs to the XseA family. Heterooligomer composed of large and small subunits.

Its subcellular location is the cytoplasm. The enzyme catalyses Exonucleolytic cleavage in either 5'- to 3'- or 3'- to 5'-direction to yield nucleoside 5'-phosphates.. Functionally, bidirectionally degrades single-stranded DNA into large acid-insoluble oligonucleotides, which are then degraded further into small acid-soluble oligonucleotides. The chain is Exodeoxyribonuclease 7 large subunit from Anaplasma phagocytophilum (strain HZ).